A 253-amino-acid polypeptide reads, in one-letter code: Phosphoglycerate mutase 2 (253 aa).

Thr-3 is modified (phosphothreonine). Residues Arg-10–Asn-17, Cys-23–Gly-24, Arg-62, Glu-89–Tyr-92, Lys-100, and Arg-116–Arg-117 contribute to the substrate site. The Tele-phosphohistidine intermediate role is filled by His-11. Ser-14 is subject to Phosphoserine. Glu-89 (proton donor/acceptor) is an active-site residue. Ser-118 bears the Phosphoserine mark. 2 positions are modified to phosphotyrosine: Tyr-132 and Tyr-133. Phosphoserine is present on Ser-135. Position 152 is a phosphothreonine (Thr-152). Gly-187–Asn-188 contributes to the substrate binding site.

This sequence belongs to the phosphoglycerate mutase family. BPG-dependent PGAM subfamily. Homodimer. Interacts with ENO1. Expressed in the heart and muscle. Not found in the liver and brain.

The enzyme catalyses (2R)-2-phosphoglycerate = (2R)-3-phosphoglycerate. It carries out the reaction (2R)-3-phospho-glyceroyl phosphate = (2R)-2,3-bisphosphoglycerate + H(+). Interconversion of 3- and 2-phosphoglycerate with 2,3-bisphosphoglycerate as the primer of the reaction. Can also catalyze the reaction of EC 5.4.2.4 (synthase), but with a reduced activity. This Homo sapiens (Human) protein is Phosphoglycerate mutase 2 (PGAM2).